Here is a 314-residue protein sequence, read N- to C-terminus: tRNA dimethylallyltransferase 1 (314 aa).

8-15 is an ATP binding site; the sequence is GPTGSGKS. Residue 10–15 coordinates substrate; the sequence is TGSGKS.

The protein belongs to the IPP transferase family. As to quaternary structure, monomer. It depends on Mg(2+) as a cofactor.

It catalyses the reaction adenosine(37) in tRNA + dimethylallyl diphosphate = N(6)-dimethylallyladenosine(37) in tRNA + diphosphate. Its function is as follows. Catalyzes the transfer of a dimethylallyl group onto the adenine at position 37 in tRNAs that read codons beginning with uridine, leading to the formation of N6-(dimethylallyl)adenosine (i(6)A). The protein is tRNA dimethylallyltransferase 1 of Mycobacterium ulcerans (strain Agy99).